A 489-amino-acid chain; its full sequence is Probable transporter MCH1 (489 aa).

Helical transmembrane passes span 34 to 54 (ISLISCLCAGSVLLFALFTPV), 68 to 88 (IIGSFTSIGMYLPLPVLGYLA), 94 to 114 (VLLSVISVLFFSPGYTLAATV), 124 to 144 (LAISFGLIGCATSALYFTALL), 156 to 175 (LTISAPVTCYGLSSLIGSRV), 196 to 216 (FSFLYFFLGLFDWVSASVVSI), 262 to 282 (ISTYVLLFSLLLSIGPSEMYI), 302 to 324 (VAIHAVFSTLSRLSLGALSDFLV), 335 to 355 (LLSIIVLGFFTQIFIATSTFV), 359 to 379 (YYIISALSGFSYGGLFTLYPT), 403 to 423 (IGSTTFGMVFGLVYDSACGVF), and 463 to 483 (SLIIINHLHYIKYIYLLILRI).

This sequence belongs to the major facilitator superfamily.

It is found in the vacuole membrane. Functionally, probable transporter. The protein is Probable transporter MCH1 (MCH1) of Wickerhamomyces anomalus (Yeast).